The chain runs to 364 residues: Dual-specificity RNA methyltransferase RlmN (364 aa).

The active-site Proton acceptor is the Glu91. One can recognise a Radical SAM core domain in the interval 97–333 (ESDRGTLCIS…VTVRKTRGDD (237 aa)). Cysteines 104 and 338 form a disulfide. 3 residues coordinate [4Fe-4S] cluster: Cys111, Cys115, and Cys118. S-adenosyl-L-methionine-binding positions include 164-165 (GE), Ser196, 218-220 (SLH), and Asn295. Cys338 serves as the catalytic S-methylcysteine intermediate.

Belongs to the radical SAM superfamily. RlmN family. [4Fe-4S] cluster serves as cofactor.

Its subcellular location is the cytoplasm. It carries out the reaction adenosine(2503) in 23S rRNA + 2 reduced [2Fe-2S]-[ferredoxin] + 2 S-adenosyl-L-methionine = 2-methyladenosine(2503) in 23S rRNA + 5'-deoxyadenosine + L-methionine + 2 oxidized [2Fe-2S]-[ferredoxin] + S-adenosyl-L-homocysteine. It catalyses the reaction adenosine(37) in tRNA + 2 reduced [2Fe-2S]-[ferredoxin] + 2 S-adenosyl-L-methionine = 2-methyladenosine(37) in tRNA + 5'-deoxyadenosine + L-methionine + 2 oxidized [2Fe-2S]-[ferredoxin] + S-adenosyl-L-homocysteine. In terms of biological role, specifically methylates position 2 of adenine 2503 in 23S rRNA and position 2 of adenine 37 in tRNAs. m2A2503 modification seems to play a crucial role in the proofreading step occurring at the peptidyl transferase center and thus would serve to optimize ribosomal fidelity. The chain is Dual-specificity RNA methyltransferase RlmN from Neisseria gonorrhoeae (strain ATCC 700825 / FA 1090).